An 827-amino-acid chain; its full sequence is SID1 transmembrane family member 1 (827 aa).

Positions 1–19 (MRGCLRLALLCALPWLLLA) are cleaved as a signal peptide. Residues 20-309 (ASPGHPAKSP…SIKESVYVKS (290 aa)) lie on the Extracellular side of the membrane. 5 N-linked (GlcNAc...) asparagine glycosylation sites follow: Asn57, Asn67, Asn83, Asn136, and Asn282. A helical transmembrane segment spans residues 310 to 330 (SLFSVFIFLSFYLGCLLVGFV). The Cytoplasmic segment spans residues 331 to 442 (HYLRFQRKSI…DRRIVSKKYK (112 aa)). A disordered region spans residues 355 to 408 (ASHPIAASTPEGSNYGTIDESSSSPGRQMSSSDGGPPGQSDTDSSVEESDFDTM). Residues 364 to 374 (PEGSNYGTIDE) show a composition bias toward polar residues. Residues 375–397 (SSSSPGRQMSSSDGGPPGQSDTD) show a composition bias toward low complexity. Residues 398–408 (SSVEESDFDTM) show a composition bias toward acidic residues. A helical transmembrane segment spans residues 443 to 463 (IYFWNIITIAVFYALPVIQLV). At 464 to 494 (ITYQTVVNVTGNQDICYYNFLCAHPLGVLSA) the chain is on the extracellular side. Asn471 is a glycosylation site (N-linked (GlcNAc...) asparagine). Residues 495–515 (FNNILSNLGHVLLGFLFLLIV) form a helical membrane-spanning segment. Residues 516-541 (LRRDILHRRALEAKDIFAVEYGIPKH) lie on the Cytoplasmic side of the membrane. Residues 542–562 (FGLFYAMGIALMMEGVLSACY) form a helical membrane-spanning segment. The Extracellular portion of the chain corresponds to 563–572 (HVCPNYSNFQ). The N-linked (GlcNAc...) asparagine glycan is linked to Asn567. The helical transmembrane segment at 573–590 (FDTSFMYMIAGLCMLKLY) threads the bilayer. Topologically, residues 591–600 (QTRHPDINAS) are cytoplasmic. Residues 601-621 (AYSAYASFAVVIMVTVLGVVF) form a helical membrane-spanning segment. The Extracellular portion of the chain corresponds to 622-626 (GKNDV). Residues 627 to 647 (WFWVIFSAIHVLASLALSTQI) form a helical membrane-spanning segment. Residues 648 to 683 (YYMGRFKIDLGIFRRAAMVFYTDCIQQCSRPLYMDR) are Cytoplasmic-facing. The chain crosses the membrane as a helical span at residues 684–704 (MVLLVVGNLVNWSFALFGLIY). Residues 705 to 710 (RPRDFA) lie on the Extracellular side of the membrane. The helical transmembrane segment at 711–731 (SYMLGIFICNLLLYLAFYIIM) threads the bilayer. Residues 732–741 (KLRSSEKVLP) are Cytoplasmic-facing. Residues 742–762 (VPLFCIVATAVMWAAALYFFF) traverse the membrane as a helical segment. Topologically, residues 763 to 791 (QNLSSWEGTPAESREKNRECILLDFFDDH) are extracellular. The N-linked (GlcNAc...) asparagine glycan is linked to Asn764. Residues 792–812 (DIWHFLSATALFFSFLVLLTL) form a helical membrane-spanning segment. At 813-827 (DDDLDVVRRDQIPVF) the chain is on the cytoplasmic side.

It belongs to the SID1 family.

The protein localises to the membrane. Functionally, in vitro binds long double-stranded RNA (dsRNA) (500 and 700 base pairs), but not dsRNA shorter than 300 bp. Not involved in RNA autophagy, a process in which RNA is directly imported into lysosomes in an ATP-dependent manner, and degraded. The chain is SID1 transmembrane family member 1 (SIDT1) from Homo sapiens (Human).